Consider the following 337-residue polypeptide: Ribonucleoside-diphosphate reductase small chain (337 aa).

Positions 85, 116, and 119 each coordinate Fe cation. Residue Y123 is part of the active site. Residues E178, E212, and H215 each contribute to the Fe cation site.

The protein belongs to the ribonucleoside diphosphate reductase small chain family. As to quaternary structure, heterodimer of a large and a small subunit. It depends on Fe cation as a cofactor.

It catalyses the reaction a 2'-deoxyribonucleoside 5'-diphosphate + [thioredoxin]-disulfide + H2O = a ribonucleoside 5'-diphosphate + [thioredoxin]-dithiol. Functionally, provides the precursors necessary for DNA synthesis. Catalyzes the biosynthesis of deoxyribonucleotides from the corresponding ribonucleotides. This chain is Ribonucleoside-diphosphate reductase small chain (RNR2), found in Trypanosoma brucei brucei.